Here is a 66-residue protein sequence, read N- to C-terminus: Large ribosomal subunit protein bL35 (66 aa).

This sequence belongs to the bacterial ribosomal protein bL35 family.

This chain is Large ribosomal subunit protein bL35, found in Caulobacter sp. (strain K31).